A 361-amino-acid polypeptide reads, in one-letter code: mRNA export factor ICP27 homolog (361 aa).

Positions 1–15 (MEDSGNSSGSEASRS) are enriched in low complexity. The disordered stretch occupies residues 1 to 107 (MEDSGNSSGS…SESARAAVSA (107 aa)). The span at 16–36 (GSEERRPVRERLGSRPPERRP) shows a compositional bias: basic and acidic residues. The interval 45 to 54 (RRRRGGRGGR) is RGG-box. Residues 80 to 99 (RQEADRPDGGPDAPPDRLSE) are compositionally biased toward basic and acidic residues. Zn(2+)-binding residues include Cys-253, His-328, Cys-332, and Cys-337. The CHC2-type zinc finger occupies 253–337 (CYLRDTPVDE…HKTGCDAPTC (85 aa)).

It belongs to the HHV-1 ICP27 protein family. As to quaternary structure, homodimer. Homodimerization is required for transactivation. Associates in a complex with RNA, and host export factors NXF1/TAP and ALYREF; these interactions allow nuclear export of viral transcripts. Interacts with three host shuttling SR proteins SRSF1, SRSF3 and SRSF7. Interacts with host SRPK1. Interacts with IE62; this interaction enhances IE62 transactivation.

It is found in the host cytoplasm. The protein localises to the host nucleus. Its function is as follows. Multifunctional regulator of the expression of viral genes that mediates nuclear export of viral intronless mRNAs. This immediate early (EI) protein promotes the nuclear export of viral intronless mRNAs by interacting with mRNAs and host NXF1/TAP. This chain is mRNA export factor ICP27 homolog, found in Suid herpesvirus 1 (strain Kaplan) (SuHV-1).